The following is a 189-amino-acid chain: Peptidyl-tRNA hydrolase (189 aa).

Tyr-14 serves as a coordination point for tRNA. Residue His-19 is the Proton acceptor of the active site. The tRNA site is built by Phe-61, Asn-63, and Asn-109.

The protein belongs to the PTH family. Monomer.

The protein localises to the cytoplasm. It catalyses the reaction an N-acyl-L-alpha-aminoacyl-tRNA + H2O = an N-acyl-L-amino acid + a tRNA + H(+). Hydrolyzes ribosome-free peptidyl-tRNAs (with 1 or more amino acids incorporated), which drop off the ribosome during protein synthesis, or as a result of ribosome stalling. Its function is as follows. Catalyzes the release of premature peptidyl moieties from peptidyl-tRNA molecules trapped in stalled 50S ribosomal subunits, and thus maintains levels of free tRNAs and 50S ribosomes. The chain is Peptidyl-tRNA hydrolase from Sulfurovum sp. (strain NBC37-1).